Reading from the N-terminus, the 369-residue chain is Serine proteinase inhibitor 1 (369 aa).

The protein belongs to the serpin family. Poxviruses subfamily.

Important in virulence. In Oryctolagus cuniculus (Rabbit), this protein is Serine proteinase inhibitor 1 (SPI-1).